An 88-amino-acid chain; its full sequence is MKFLLLFLVVLPIMGVFGKKNGYAVDSSGKAPECLLSNYCNNECTKVHYADKGYCCLLSCYCFGLNDDKKVLEISDTRKSYCDTTIIN.

The N-terminal stretch at methionine 1–glycine 18 is a signal peptide. The LCN-type CS-alpha/beta domain occupies lysine 20–aspartate 83. 4 cysteine pairs are disulfide-bonded: cysteine 34–cysteine 55, cysteine 40–cysteine 60, cysteine 44–cysteine 62, and cysteine 56–cysteine 82.

The protein belongs to the long (4 C-C) scorpion toxin superfamily. Sodium channel inhibitor family. Beta subfamily. Expressed by the venom gland.

It is found in the secreted. In terms of biological role, excitatory insect beta-toxins induce a spastic paralysis. They bind voltage-independently at site-4 of sodium channels (Nav) and shift the voltage of activation toward more negative potentials thereby affecting sodium channel activation and promoting spontaneous and repetitive firing. This toxin is active only on insects. This is Beta-insect excitatory toxin 1 from Androctonus australis (Sahara scorpion).